A 75-amino-acid chain; its full sequence is Probable [Fe-S]-dependent transcriptional repressor (75 aa).

4 residues coordinate iron-sulfur cluster: Cys55, Cys60, Cys63, and Cys72.

The protein belongs to the FeoC family.

May function as a transcriptional regulator that controls feoABC expression. This Serratia marcescens protein is Probable [Fe-S]-dependent transcriptional repressor.